The primary structure comprises 229 residues: Phosphoglycolate phosphatase (229 aa).

Asp18 (nucleophile) is an active-site residue. Mg(2+)-binding residues include Asp18, Asp20, and Asp176.

This sequence belongs to the HAD-like hydrolase superfamily. CbbY/CbbZ/Gph/YieH family. It depends on Mg(2+) as a cofactor.

The enzyme catalyses 2-phosphoglycolate + H2O = glycolate + phosphate. It participates in organic acid metabolism; glycolate biosynthesis; glycolate from 2-phosphoglycolate: step 1/1. Functionally, specifically catalyzes the dephosphorylation of 2-phosphoglycolate. Is involved in the dissimilation of the intracellular 2-phosphoglycolate formed during the DNA repair of 3'-phosphoglycolate ends, a major class of DNA lesions induced by oxidative stress. The polypeptide is Phosphoglycolate phosphatase (Xylella fastidiosa (strain Temecula1 / ATCC 700964)).